A 69-amino-acid polypeptide reads, in one-letter code: Large ribosomal subunit protein uL29 (69 aa).

It belongs to the universal ribosomal protein uL29 family.

This chain is Large ribosomal subunit protein uL29, found in Rhodospirillum centenum (strain ATCC 51521 / SW).